The primary structure comprises 82 residues: Small ribosomal subunit protein bS16 (82 aa).

The protein belongs to the bacterial ribosomal protein bS16 family.

The protein is Small ribosomal subunit protein bS16 of Acidobacterium capsulatum (strain ATCC 51196 / DSM 11244 / BCRC 80197 / JCM 7670 / NBRC 15755 / NCIMB 13165 / 161).